The chain runs to 283 residues: Protein FDD123 (283 aa).

7 helical membrane passes run 24–44 (WLWAAFSVFGVSLLTVVAWTF), 52–72 (LFHQIAIVVLTTGSLAYFSMA), 97–117 (YIQWFITFPLLLLELLLATGL), 122–142 (IFTTLFMSIVLVITGLVAALV), 148–168 (WGYYTFGVSALFYIWYVLLWH), 185–205 (ILAAGYLSFLLLLYPIAWACA), and 217–237 (MIWYGILDIFAGPIFLFFFLW).

Belongs to the archaeal/bacterial/fungal opsin family.

The protein localises to the membrane. This Trametes versicolor (White-rot fungus) protein is Protein FDD123 (FDD123).